The following is a 249-amino-acid chain: Phosphate import ATP-binding protein PstB (249 aa).

Positions 4-244 (VKIKDLSLFY…PQDKRTEDYI (241 aa)) constitute an ABC transporter domain. Position 36–43 (36–43 (GPSGCGKS)) interacts with ATP.

It belongs to the ABC transporter superfamily. Phosphate importer (TC 3.A.1.7) family. In terms of assembly, the complex is composed of two ATP-binding proteins (PstB), two transmembrane proteins (PstC and PstA) and a solute-binding protein (PstS).

Its subcellular location is the cell membrane. The enzyme catalyses phosphate(out) + ATP + H2O = ADP + 2 phosphate(in) + H(+). Functionally, part of the ABC transporter complex PstSACB involved in phosphate import. Responsible for energy coupling to the transport system. The protein is Phosphate import ATP-binding protein PstB of Clostridium tetani (strain Massachusetts / E88).